The following is a 367-amino-acid chain: Alanine racemase (367 aa).

The Proton acceptor; specific for D-alanine role is filled by Lys-40. At Lys-40 the chain carries N6-(pyridoxal phosphate)lysine. Arg-136 is a binding site for substrate. Tyr-263 functions as the Proton acceptor; specific for L-alanine in the catalytic mechanism. Met-310 contacts substrate.

It belongs to the alanine racemase family. The cofactor is pyridoxal 5'-phosphate.

It catalyses the reaction L-alanine = D-alanine. The protein operates within amino-acid biosynthesis; D-alanine biosynthesis; D-alanine from L-alanine: step 1/1. Its function is as follows. Catalyzes the interconversion of L-alanine and D-alanine. May also act on other amino acids. The sequence is that of Alanine racemase (alr) from Lactococcus lactis subsp. lactis (strain IL1403) (Streptococcus lactis).